Consider the following 474-residue polypeptide: tRNA-2-methylthio-N(6)-dimethylallyladenosine synthase (474 aa).

An MTTase N-terminal domain is found at Lys-3 to Gly-120. 6 residues coordinate [4Fe-4S] cluster: Cys-12, Cys-49, Cys-83, Cys-157, Cys-161, and Cys-164. The region spanning Arg-143–Gln-375 is the Radical SAM core domain. Positions Arg-378–Arg-441 constitute a TRAM domain.

The protein belongs to the methylthiotransferase family. MiaB subfamily. As to quaternary structure, monomer. [4Fe-4S] cluster is required as a cofactor.

It is found in the cytoplasm. The enzyme catalyses N(6)-dimethylallyladenosine(37) in tRNA + (sulfur carrier)-SH + AH2 + 2 S-adenosyl-L-methionine = 2-methylsulfanyl-N(6)-dimethylallyladenosine(37) in tRNA + (sulfur carrier)-H + 5'-deoxyadenosine + L-methionine + A + S-adenosyl-L-homocysteine + 2 H(+). Functionally, catalyzes the methylthiolation of N6-(dimethylallyl)adenosine (i(6)A), leading to the formation of 2-methylthio-N6-(dimethylallyl)adenosine (ms(2)i(6)A) at position 37 in tRNAs that read codons beginning with uridine. This Serratia proteamaculans (strain 568) protein is tRNA-2-methylthio-N(6)-dimethylallyladenosine synthase.